Consider the following 1023-residue polypeptide: FHIP family protein AGAP011705 (1023 aa).

Composition is skewed to polar residues over residues 1–13 (MSWL…RQSF), 806–825 (SMTS…SSSY), and 868–888 (GLNH…ASMN). 2 disordered regions span residues 1–39 (MSWL…AGGG) and 797–927 (GKLL…AETQ). Residues 889-906 (VPSPVGQQQHQHQSVSSV) show a composition bias toward low complexity.

The protein belongs to the FHIP family.

The protein is FHIP family protein AGAP011705 of Anopheles gambiae (African malaria mosquito).